The sequence spans 258 residues: Tryptophan synthase alpha chain (258 aa).

Catalysis depends on proton acceptor residues E47 and D58.

This sequence belongs to the TrpA family. Tetramer of two alpha and two beta chains.

The catalysed reaction is (1S,2R)-1-C-(indol-3-yl)glycerol 3-phosphate + L-serine = D-glyceraldehyde 3-phosphate + L-tryptophan + H2O. Its pathway is amino-acid biosynthesis; L-tryptophan biosynthesis; L-tryptophan from chorismate: step 5/5. Functionally, the alpha subunit is responsible for the aldol cleavage of indoleglycerol phosphate to indole and glyceraldehyde 3-phosphate. The protein is Tryptophan synthase alpha chain of Bacillus cereus (strain B4264).